The sequence spans 358 residues: Isopentenyl-diphosphate delta-isomerase (358 aa).

A substrate-binding site is contributed by 12-13 (RK). FMN is bound by residues 69–71 (AMT), S99, and N128. Q158 is a binding site for substrate. E159 is a binding site for Mg(2+). Residues K190, T220, 267–269 (GIR), and 288–289 (AG) each bind FMN.

This sequence belongs to the IPP isomerase type 2 family. Homooctamer. Dimer of tetramers. FMN serves as cofactor. NADPH is required as a cofactor. It depends on Mg(2+) as a cofactor.

It is found in the cytoplasm. It catalyses the reaction isopentenyl diphosphate = dimethylallyl diphosphate. Functionally, involved in the biosynthesis of isoprenoids. Catalyzes the 1,3-allylic rearrangement of the homoallylic substrate isopentenyl (IPP) to its allylic isomer, dimethylallyl diphosphate (DMAPP). This Listeria monocytogenes serotype 4b (strain CLIP80459) protein is Isopentenyl-diphosphate delta-isomerase.